Reading from the N-terminus, the 191-residue chain is Protein Ves (191 aa).

This sequence belongs to the Ves family.

The polypeptide is Protein Ves (Escherichia coli (strain ATCC 8739 / DSM 1576 / NBRC 3972 / NCIMB 8545 / WDCM 00012 / Crooks)).